A 172-amino-acid polypeptide reads, in one-letter code: MFCLLLRRSAVHNSCKLISKQIAKPAFYTPHNALHTTIPRRHGEFEWQDPKSTDEIVNITYVDKDGKRTKVQGKVGDNVLYLAHRHGIEMEGACEASLACTTCHVYVQHDYLQKLKEAEEQEDDLLDMAPFLRENSRLGCQILLDKSMEGMELELPKATRNFYVDGHKPKPH.

Residues Val-57 to Thr-159 form the 2Fe-2S ferredoxin-type domain. The [2Fe-2S] cluster site is built by Cys-94, Cys-100, Cys-103, and Cys-140.

Belongs to the adrenodoxin/putidaredoxin family. [2Fe-2S] cluster serves as cofactor.

The protein resides in the mitochondrion matrix. Its function is as follows. Required for ecdysteroidogenesis in the prothoracic gland which is necessary for larval to pupal transition. In Drosophila melanogaster (Fruit fly), this protein is Adrenodoxin-like protein 1, mitochondrial.